Here is a 179-residue protein sequence, read N- to C-terminus: Large ribosomal subunit protein uL6 (179 aa).

Belongs to the universal ribosomal protein uL6 family. Part of the 50S ribosomal subunit.

Functionally, this protein binds to the 23S rRNA, and is important in its secondary structure. It is located near the subunit interface in the base of the L7/L12 stalk, and near the tRNA binding site of the peptidyltransferase center. The protein is Large ribosomal subunit protein uL6 of Rhodococcus jostii (strain RHA1).